The primary structure comprises 725 residues: DNA replication licensing factor MCM7 (725 aa).

The MCM domain maps to I333–H538. ATP is bound at residue G383–S390. The short motif at S515–D518 is the Arginine finger element.

Belongs to the MCM family. In terms of assembly, component of the minichromosome maintenance (MCM) complex, a heterotetramer composed of MCM2, MCM3, MCM4, MCM5, MCM6 and MCM7.

The protein resides in the nucleus. The enzyme catalyses ATP + H2O = ADP + phosphate + H(+). In terms of biological role, probable component of the MCM2-7 complex (MCM complex) that may function as a DNA helicase and which is essential to undergo a single round of replication initiation and elongation per cell cycle in eukaryotic cells. This Oryza sativa subsp. indica (Rice) protein is DNA replication licensing factor MCM7 (MCM7).